Reading from the N-terminus, the 301-residue chain is Putative S-adenosyl-L-methionine-dependent methyltransferase MAP_3777 (301 aa).

Residues aspartate 126 and 155–156 contribute to the S-adenosyl-L-methionine site; that span reads DL.

This sequence belongs to the UPF0677 family.

Exhibits S-adenosyl-L-methionine-dependent methyltransferase activity. The protein is Putative S-adenosyl-L-methionine-dependent methyltransferase MAP_3777 of Mycolicibacterium paratuberculosis (strain ATCC BAA-968 / K-10) (Mycobacterium paratuberculosis).